The primary structure comprises 369 residues: Prenyltransferase malB (369 aa).

Glu87 provides a ligand contact to substrate. Dimethylallyl diphosphate is bound by residues Arg100 and Tyr189. Tyr191 provides a ligand contact to substrate.

It belongs to the tryptophan dimethylallyltransferase family.

Prenyltransferase; part of the gene cluster that mediates the biosynthesis of malbrancheamide, a dichlorinated fungal indole alkaloid that belongs to a family of natural products containing a characteristic bicyclo[2.2.2]diazaoctane core. The first step of malbrancheamide biosynthesis involves coupling of L-proline and L-tryptophan by malG, a bimodular NRPS, to produce L-Pro-L-Trp aldehyde through reductive offloading. This compound undergoes spontaneous cyclization and dehydration to give a dienamine which is reverse prenylated at C-2 by malE. The other prenyltransferase present in the cluster, malB, displays modest activity, suggesting that may be a redundant gene in the pathway. Subsequently, a [4+2] Diels-Alder cyclo-addition catalyzed by the bifunctional enzyme malC forms the characteristic bicyclo[2.2.2]diazaoctane ring of premalbrancheamid. Finally, the flavin-dependent halogenase malA catalyzes the iterative dichlorination of the indole ring of premalbrancheamide to yield C-9 monochlorinated malbrancheamide B, C-8 monochlorinated isomalbrancheamide B, and dichlorinated malbrancheamide. MalA is also able to brominate premalbrancheamide at C-9 to yield malbrancheamide C, and, to a lesser extend, at C-8 to yield isomalbrancheamide C. Finally, malA can brominate C-9 monochlorinated malbrancheamide B at C-8 to yield malbrancheamide D, or C-8 monochlorinated isomalbrancheamide B at C-9 to produce isomalbrancheamide D. The chain is Prenyltransferase malB from Malbranchea aurantiaca.